The following is a 308-amino-acid chain: Dual oxidase maturation factor 1 (308 aa).

Over 1 to 21 (MQANIFPFYPQPRTPFKFDTK) the chain is Extracellular. A helical membrane pass occupies residues 22 to 42 (IIEIIIICIVTACTFIIILPG). At 43 to 49 (IRGKSRS) the chain is on the cytoplasmic side. The chain crosses the membrane as a helical span at residues 50 to 70 (IWLLRILTSLFIGAVILAVNF). Over 71–91 (TSDWEMGTITATTVYKSFSHS) the chain is Extracellular. The helical transmembrane segment at 92 to 112 (MLNASIGLWIGLKGLNITLIG) threads the bilayer. Residues 113–175 (NPEYQLNETI…GLFQQYCIST (63 aa)) are Cytoplasmic-facing. Residues 176–198 (YYSSGIMWIAFCSWILYNVLFSM) traverse the membrane as a helical segment. A topological domain (extracellular) is located at residue proline 199. Residues 200 to 220 (VILYGIYMMFVTAICMLVSLI) form a helical membrane-spanning segment. The Cytoplasmic portion of the chain corresponds to 221–247 (SFASVRKAPVCNIQFGNSILKTHFGVS). The helical transmembrane segment at 248–268 (YWLSLITGLLCLIISLVLLFL) threads the bilayer. Topologically, residues 269 to 308 (YKTQPKVLQLIFSYGEEEDLSNKSENEEEHSSVLSLNEIL) are extracellular. An N-linked (GlcNAc...) asparagine glycan is attached at asparagine 290.

The protein belongs to the DUOXA family.

The protein resides in the membrane. Its function is as follows. Possible role in maturation and transport from the endoplasmic reticulum to the plasma membrane of functional dual oxidase. The polypeptide is Dual oxidase maturation factor 1 (duoxa1) (Xenopus laevis (African clawed frog)).